The sequence spans 137 residues: Succinate dehydrogenase cytochrome b560 subunit (137 aa).

The next 2 helical transmembrane spans lie at Ala-31–Leu-51 and Phe-60–Leu-80. His-85 is a binding site for heme. A helical transmembrane segment spans residues Val-106–Ile-126.

The protein belongs to the cytochrome b560 family. Forms part of complex II containing four subunits: a 70 kDa flavoprotein (FP), a 27 kDa iron-sulfur protein (IP), a cytochrome B and a membrane-anchoring protein. Heme is required as a cofactor.

The protein localises to the mitochondrion inner membrane. Its pathway is carbohydrate metabolism; tricarboxylic acid cycle. Functionally, membrane-anchoring subunit of succinate dehydrogenase (SDH) that is involved in complex II of the mitochondrial electron transport chain and is responsible for transferring electrons from succinate to ubiquinone (coenzyme Q). The protein is Succinate dehydrogenase cytochrome b560 subunit (SDH3) of Marchantia polymorpha (Common liverwort).